The chain runs to 315 residues: Coproporphyrin III ferrochelatase (315 aa).

Residues tyrosine 13, arginine 30, 46-47, serine 54, and tyrosine 125 each bind Fe-coproporphyrin III; that span reads RY. Residues histidine 183 and glutamate 264 each coordinate Fe(2+).

Belongs to the ferrochelatase family.

It is found in the cytoplasm. The enzyme catalyses Fe-coproporphyrin III + 2 H(+) = coproporphyrin III + Fe(2+). It functions in the pathway porphyrin-containing compound metabolism; protoheme biosynthesis. Involved in coproporphyrin-dependent heme b biosynthesis. Catalyzes the insertion of ferrous iron into coproporphyrin III to form Fe-coproporphyrin III. The protein is Coproporphyrin III ferrochelatase of Anoxybacillus flavithermus (strain DSM 21510 / WK1).